Reading from the N-terminus, the 282-residue chain is MNEFYIGILYIVPTPIGNLSDITYRALEVLKDVDIIAAENIRHTNILLQHFNIKNNLILMNKDNEKKQSHNLIQELKKGKKIALVSNAGTPIINDPGCILIKQCHIFDIKVIPLPGACAAITALSASGIINNRFCYEGFLPSRKKSRCDLLHSLKEETRTIIFYESKHRILESIKDIIEQIDKNRHIVIAREMTKKWESIYGAKASLILEWLKENKYRYKGEMVIIIDGFKKLKNYTLSKKILDTFSILRKFFSLKTSVLITAQIHDINKNKLYQYVIKKEE.

The protein belongs to the methyltransferase superfamily. RsmI family.

It is found in the cytoplasm. The catalysed reaction is cytidine(1402) in 16S rRNA + S-adenosyl-L-methionine = 2'-O-methylcytidine(1402) in 16S rRNA + S-adenosyl-L-homocysteine + H(+). Catalyzes the 2'-O-methylation of the ribose of cytidine 1402 (C1402) in 16S rRNA. In Buchnera aphidicola subsp. Acyrthosiphon pisum (strain APS) (Acyrthosiphon pisum symbiotic bacterium), this protein is Ribosomal RNA small subunit methyltransferase I.